Reading from the N-terminus, the 143-residue chain is Hemoglobin subunit alpha (143 aa).

At serine 2 the chain carries N-acetylserine. The region spanning 2–143 (SLSDKDKAAV…LALALSEKYR (142 aa)) is the Globin domain. Histidine 60 serves as a coordination point for O2. Histidine 89 provides a ligand contact to heme b.

This sequence belongs to the globin family. Heterotetramer of two alpha chains and two beta chains. As to expression, red blood cells.

Involved in oxygen transport from gills to the various peripheral tissues. This Cyprinus carpio (Common carp) protein is Hemoglobin subunit alpha (hba).